The primary structure comprises 122 residues: UPF0145 protein Bmul_3577/BMULJ_04940 (122 aa).

The protein belongs to the UPF0145 family.

In Burkholderia multivorans (strain ATCC 17616 / 249), this protein is UPF0145 protein Bmul_3577/BMULJ_04940.